A 179-amino-acid polypeptide reads, in one-letter code: Large ribosomal subunit protein uL5 (179 aa).

It belongs to the universal ribosomal protein uL5 family. As to quaternary structure, part of the 50S ribosomal subunit; part of the 5S rRNA/L5/L18/L25 subcomplex. Contacts the 5S rRNA and the P site tRNA. Forms a bridge to the 30S subunit in the 70S ribosome.

In terms of biological role, this is one of the proteins that bind and probably mediate the attachment of the 5S RNA into the large ribosomal subunit, where it forms part of the central protuberance. In the 70S ribosome it contacts protein S13 of the 30S subunit (bridge B1b), connecting the 2 subunits; this bridge is implicated in subunit movement. Contacts the P site tRNA; the 5S rRNA and some of its associated proteins might help stabilize positioning of ribosome-bound tRNAs. This chain is Large ribosomal subunit protein uL5, found in Halorhodospira halophila (strain DSM 244 / SL1) (Ectothiorhodospira halophila (strain DSM 244 / SL1)).